A 384-amino-acid chain; its full sequence is 23S rRNA (uracil(747)-C(5))-methyltransferase RlmC (384 aa).

Residues Cys3, Cys11, Cys14, and Cys87 each contribute to the [4Fe-4S] cluster site. The S-adenosyl-L-methionine site is built by Gln212, Phe241, Glu262, and Asn309. Cys336 functions as the Nucleophile in the catalytic mechanism.

Belongs to the class I-like SAM-binding methyltransferase superfamily. RNA M5U methyltransferase family. RlmC subfamily.

It carries out the reaction uridine(747) in 23S rRNA + S-adenosyl-L-methionine = 5-methyluridine(747) in 23S rRNA + S-adenosyl-L-homocysteine + H(+). Functionally, catalyzes the formation of 5-methyl-uridine at position 747 (m5U747) in 23S rRNA. In Shewanella amazonensis (strain ATCC BAA-1098 / SB2B), this protein is 23S rRNA (uracil(747)-C(5))-methyltransferase RlmC.